We begin with the raw amino-acid sequence, 517 residues long: Cytochrome P450 1A1 (517 aa).

The interval 34-45 (WQPRVPKGLKSP) is mitochondrial targeting signal. Ser72 is a glycosylation site (O-linked (GlcNAc) serine). Phe229 provides a ligand contact to substrate. Position 462 (Cys462) interacts with heme.

The protein belongs to the cytochrome P450 family. As to quaternary structure, interacts with cytosolic chaperones HSP70 and HSP90; this interaction is required for initial targeting to mitochondria. Interacts (via mitochondrial targeting signal) with TOMM40 (via N-terminus); this interaction is required for translocation across the mitochondrial outer membrane. It depends on heme as a cofactor.

It localises to the endoplasmic reticulum membrane. The protein localises to the mitochondrion inner membrane. The protein resides in the microsome membrane. Its subcellular location is the cytoplasm. The catalysed reaction is an organic molecule + reduced [NADPH--hemoprotein reductase] + O2 = an alcohol + oxidized [NADPH--hemoprotein reductase] + H2O + H(+). It catalyses the reaction estrone + reduced [NADPH--hemoprotein reductase] + O2 = 2-hydroxyestrone + oxidized [NADPH--hemoprotein reductase] + H2O + H(+). The enzyme catalyses estrone + reduced [NADPH--hemoprotein reductase] + O2 = 4-hydroxyestrone + oxidized [NADPH--hemoprotein reductase] + H2O + H(+). It carries out the reaction estrone + reduced [NADPH--hemoprotein reductase] + O2 = 6alpha-hydroxyestrone + oxidized [NADPH--hemoprotein reductase] + H2O + H(+). The catalysed reaction is estrone + reduced [NADPH--hemoprotein reductase] + O2 = 15alpha-hydroxyestrone + oxidized [NADPH--hemoprotein reductase] + H2O + H(+). It catalyses the reaction estrone + reduced [NADPH--hemoprotein reductase] + O2 = 16alpha-hydroxyestrone + oxidized [NADPH--hemoprotein reductase] + H2O + H(+). The enzyme catalyses 17beta-estradiol + reduced [NADPH--hemoprotein reductase] + O2 = 2-hydroxy-17beta-estradiol + oxidized [NADPH--hemoprotein reductase] + H2O + H(+). It carries out the reaction 17beta-estradiol + reduced [NADPH--hemoprotein reductase] + O2 = 4-hydroxy-17beta-estradiol + oxidized [NADPH--hemoprotein reductase] + H2O + H(+). The catalysed reaction is 17beta-estradiol + reduced [NADPH--hemoprotein reductase] + O2 = 6alpha-hydroxy-17beta-estradiol + oxidized [NADPH--hemoprotein reductase] + H2O + H(+). It catalyses the reaction 17beta-estradiol + reduced [NADPH--hemoprotein reductase] + O2 = 7alpha-hydroxy-17beta-estradiol + oxidized [NADPH--hemoprotein reductase] + H2O + H(+). The enzyme catalyses 17beta-estradiol + reduced [NADPH--hemoprotein reductase] + O2 = 15alpha-hydroxy-17beta-estradiol + oxidized [NADPH--hemoprotein reductase] + H2O + H(+). It carries out the reaction (5Z,8Z,11Z)-eicosatrienoate + reduced [NADPH--hemoprotein reductase] + O2 = 19-hydroxy-(5Z,8Z,11Z)-eicosatrienoate + oxidized [NADPH--hemoprotein reductase] + H2O + H(+). The catalysed reaction is (5Z,8Z,11Z,14Z)-eicosatetraenoate + reduced [NADPH--hemoprotein reductase] + O2 = 16-hydroxy-(5Z,8Z,11Z,14Z)-eicosatetraenoate + oxidized [NADPH--hemoprotein reductase] + H2O + H(+). It catalyses the reaction (5Z,8Z,11Z,14Z)-eicosatetraenoate + reduced [NADPH--hemoprotein reductase] + O2 = 17-hydroxy-(5Z,8Z,11Z,14Z)-eicosatetraenoate + oxidized [NADPH--hemoprotein reductase] + H2O + H(+). The enzyme catalyses (5Z,8Z,11Z,14Z)-eicosatetraenoate + reduced [NADPH--hemoprotein reductase] + O2 = 18-hydroxy-(5Z,8Z,11Z,14Z)-eicosatetraenoate + oxidized [NADPH--hemoprotein reductase] + H2O + H(+). It carries out the reaction (5Z,8Z,11Z,14Z)-eicosatetraenoate + reduced [NADPH--hemoprotein reductase] + O2 = 19-hydroxy-(5Z,8Z,11Z,14Z)-eicosatetraenoate + oxidized [NADPH--hemoprotein reductase] + H2O + H(+). The catalysed reaction is (5Z,8Z,11Z,14Z,17Z)-eicosapentaenoate + reduced [NADPH--hemoprotein reductase] + O2 = 19-hydroxy-(5Z,8Z,11Z,14Z,17Z)-eicosapentaenoate + oxidized [NADPH--hemoprotein reductase] + H2O + H(+). It catalyses the reaction (5Z,8Z,11Z,14Z)-eicosatetraenoate + reduced [NADPH--hemoprotein reductase] + O2 = (8R,9S)-epoxy-(5Z,11Z,14Z)-eicosatrienoate + oxidized [NADPH--hemoprotein reductase] + H2O + H(+). The enzyme catalyses (5Z,8Z,11Z,14Z)-eicosatetraenoate + reduced [NADPH--hemoprotein reductase] + O2 = (11R,12S)-epoxy-(5Z,8Z,14Z)-eicosatrienoate + oxidized [NADPH--hemoprotein reductase] + H2O + H(+). It carries out the reaction (5Z,8Z,11Z,14Z)-eicosatetraenoate + reduced [NADPH--hemoprotein reductase] + O2 = (14S,15R)-epoxy-(5Z,8Z,11Z)-eicosatrienoate + oxidized [NADPH--hemoprotein reductase] + H2O + H(+). The catalysed reaction is (5Z,8Z,11Z,14Z)-eicosatetraenoate + reduced [NADPH--hemoprotein reductase] + O2 = (14R,15S)-epoxy-(5Z,8Z,11Z)-eicosatrienoate + oxidized [NADPH--hemoprotein reductase] + H2O + H(+). It catalyses the reaction (5Z,8Z,11Z,14Z,17Z)-eicosapentaenoate + reduced [NADPH--hemoprotein reductase] + O2 = (17R,18S)-epoxy-(5Z,8Z,11Z,14Z)-eicosatetraenoate + oxidized [NADPH--hemoprotein reductase] + H2O + H(+). The enzyme catalyses (4Z,7Z,10Z,13Z,16Z,19Z)-docosahexaenoate + reduced [NADPH--hemoprotein reductase] + O2 = (19S,20R)-epoxy-(4Z,7Z,10Z,13Z,16Z)-docosapentaenoate + oxidized [NADPH--hemoprotein reductase] + H2O + H(+). It carries out the reaction (4Z,7Z,10Z,13Z,16Z,19Z)-docosahexaenoate + reduced [NADPH--hemoprotein reductase] + O2 = (19R,20S)-epoxy-(4Z,7Z,10Z,13Z,16Z)-docosapentaenoate + oxidized [NADPH--hemoprotein reductase] + H2O + H(+). The catalysed reaction is all-trans-retinol + reduced [NADPH--hemoprotein reductase] + O2 = all-trans-retinal + oxidized [NADPH--hemoprotein reductase] + 2 H2O + H(+). It catalyses the reaction all-trans-retinal + reduced [NADPH--hemoprotein reductase] + O2 = all-trans-retinoate + oxidized [NADPH--hemoprotein reductase] + H2O + 2 H(+). The enzyme catalyses (13S)-hydroperoxy-(9Z,11E)-octadecadienoate = 13-oxo-(9Z,11E)-octadecadienoate + H2O. It carries out the reaction (12S)-hydroperoxy-(5Z,8Z,10E,14Z)-eicosatetraenoate = 12-oxo-(5Z,8Z,10E,14Z)-eicosatetraenoate + H2O. The catalysed reaction is (15S)-hydroperoxy-(5Z,8Z,11Z,13E)-eicosatetraenoate = 15-oxo-(5Z,8Z,11Z,13E)-eicosatetraenoate + H2O. It catalyses the reaction (5S)-hydroperoxy-(6E,8Z,11Z,14Z)-eicosatetraenoate = 5-oxo-(6E,8Z,11Z,14Z)-eicosatetraenoate + H2O. It functions in the pathway steroid hormone biosynthesis. The protein operates within lipid metabolism; fatty acid metabolism. It participates in cofactor metabolism; retinol metabolism. A cytochrome P450 monooxygenase involved in the metabolism of various endogenous substrates, including fatty acids, steroid hormones and vitamins. Mechanistically, uses molecular oxygen inserting one oxygen atom into a substrate, and reducing the second into a water molecule, with two electrons provided by NADPH via cytochrome P450 reductase (CPR; NADPH-ferrihemoprotein reductase). Catalyzes the hydroxylation of carbon-hydrogen bonds. Exhibits high catalytic activity for the formation of hydroxyestrogens from estrone (E1) and 17beta-estradiol (E2), namely 2-hydroxy E1 and E2, as well as D-ring hydroxylated E1 and E2 at the C15alpha and C16alpha positions. Displays different regioselectivities for polyunsaturated fatty acids (PUFA) hydroxylation. Catalyzes the epoxidation of double bonds of certain PUFA. Converts arachidonic acid toward epoxyeicosatrienoic acid (EET) regioisomers, 8,9-, 11,12-, and 14,15-EET, that function as lipid mediators in the vascular system. Displays an absolute stereoselectivity in the epoxidation of eicosapentaenoic acid (EPA) producing the 17(R),18(S) enantiomer. May play an important role in all-trans retinoic acid biosynthesis in extrahepatic tissues. Catalyzes two successive oxidative transformation of all-trans retinol to all-trans retinal and then to the active form all-trans retinoic acid. May also participate in eicosanoids metabolism by converting hydroperoxide species into oxo metabolites (lipoxygenase-like reaction, NADPH-independent). The chain is Cytochrome P450 1A1 (CYP1A1) from Felis catus (Cat).